The sequence spans 294 residues: 33 kDa chaperonin (294 aa).

Cystine bridges form between Cys238/Cys240 and Cys271/Cys274.

The protein belongs to the HSP33 family. Post-translationally, under oxidizing conditions two disulfide bonds are formed involving the reactive cysteines. Under reducing conditions zinc is bound to the reactive cysteines and the protein is inactive.

It localises to the cytoplasm. Its function is as follows. Redox regulated molecular chaperone. Protects both thermally unfolding and oxidatively damaged proteins from irreversible aggregation. Plays an important role in the bacterial defense system toward oxidative stress. The sequence is that of 33 kDa chaperonin from Caldanaerobacter subterraneus subsp. tengcongensis (strain DSM 15242 / JCM 11007 / NBRC 100824 / MB4) (Thermoanaerobacter tengcongensis).